The chain runs to 117 residues: Large ribosomal subunit protein uL18 (117 aa).

This sequence belongs to the universal ribosomal protein uL18 family. As to quaternary structure, part of the 50S ribosomal subunit; part of the 5S rRNA/L5/L18/L25 subcomplex. Contacts the 5S and 23S rRNAs.

In terms of biological role, this is one of the proteins that bind and probably mediate the attachment of the 5S RNA into the large ribosomal subunit, where it forms part of the central protuberance. This chain is Large ribosomal subunit protein uL18, found in Vibrio vulnificus (strain CMCP6).